The chain runs to 35 residues: Photosystem II reaction center protein T (35 aa).

Residues 3–23 (ALVYTFLLVSTLGIIFFAIFF) traverse the membrane as a helical segment.

It belongs to the PsbT family. In terms of assembly, PSII is composed of 1 copy each of membrane proteins PsbA, PsbB, PsbC, PsbD, PsbE, PsbF, PsbH, PsbI, PsbJ, PsbK, PsbL, PsbM, PsbT, PsbY, PsbZ, Psb30/Ycf12, at least 3 peripheral proteins of the oxygen-evolving complex and a large number of cofactors. It forms dimeric complexes.

Its subcellular location is the plastid. The protein resides in the chloroplast thylakoid membrane. Its function is as follows. Found at the monomer-monomer interface of the photosystem II (PS II) dimer, plays a role in assembly and dimerization of PSII. PSII is a light-driven water plastoquinone oxidoreductase, using light energy to abstract electrons from H(2)O, generating a proton gradient subsequently used for ATP formation. The chain is Photosystem II reaction center protein T from Bassia hyssopifolia (Fivehorn smotherweed).